The primary structure comprises 1002 residues: Copper-transporting ATPase HMA5 (1002 aa).

Residues 32 to 48 (RPRYPSMPRRPRSAAVA) show a composition bias toward low complexity. Residues 32–63 (RPRYPSMPRRPRSAAVAGEGGEGGGGGGDGDL) form a disordered region. A compositionally biased stretch (gly residues) spans 49–60 (GEGGEGGGGGGD). HMA domains lie at 75–141 (KVAV…FEAK), 153–219 (LVCR…FEAI), and 228–294 (SRID…SGDL). Residues C86, C89, C164, and C167 each contribute to the Cu(+) site. Helical transmembrane passes span 320 to 340 (FLWSLVFTIPVFLTSMVFMYI), 354 to 374 (MMSIGELLRWILSTPVQFVIG), 392 to 412 (MDVLIALGTNTAYFYSVYSIL), 425 to 445 (FFETSSMLISFILLGKYLEIL), 585 to 605 (VFVPLVIILSLLTWLAWFLAG), 624 to 644 (LALQFGISVMVIACPCALGLA), 943 to 963 (YVWALGYNIIGIPIAAGVLFP), and 972 to 992 (WVAGAAMAASSVSVVCWSLLL).

The protein belongs to the cation transport ATPase (P-type) (TC 3.A.3) family. Type IB subfamily. As to expression, expressed in root pericycle cells, xylem region of diffuse vascular bundles in the first node, and vascular tissues of peduncle, rachis and husk.

The protein resides in the cell membrane. The enzyme catalyses Cu(+)(in) + ATP + H2O = Cu(+)(out) + ADP + phosphate + H(+). Copper (Cu) transporter that plays an essential role in promoting translocation of Cu from roots to shoots. Involved in loading Cu to the xylem of the roots and other organs, including panicles. This Oryza sativa subsp. japonica (Rice) protein is Copper-transporting ATPase HMA5.